A 761-amino-acid chain; its full sequence is Subtilisin-like protease SBT3.15 (761 aa).

The N-terminal stretch at 1–21 (MENSFLSSKLVFLLAIALVLF) is a signal peptide. Residues 22–120 (LNTELSFLTA…VIPNRILKLK (99 aa)) constitute a propeptide, activation peptide. In terms of domain architecture, Inhibitor I9 spans 41–119 (VYIVYLGQRE…HVIPNRILKL (79 aa)). The region spanning 134-613 (PTSFSSSSSA…GGLVNPEKAA (480 aa)) is the Peptidase S8 domain. N-linked (GlcNAc...) asparagine glycosylation occurs at asparagine 151. The active-site Charge relay system is the aspartate 164. A glycan (N-linked (GlcNAc...) asparagine) is linked at asparagine 197. Histidine 241 serves as the catalytic Charge relay system. Residues asparagine 256 and asparagine 384 are each glycosylated (N-linked (GlcNAc...) asparagine). The active-site Charge relay system is serine 544. Asparagine 636 carries an N-linked (GlcNAc...) asparagine glycan.

Belongs to the peptidase S8 family.

It is found in the secreted. The sequence is that of Subtilisin-like protease SBT3.15 from Arabidopsis thaliana (Mouse-ear cress).